We begin with the raw amino-acid sequence, 60 residues long: Temporin-CG2 (60 aa).

The N-terminal stretch at 1–22 is a signal peptide; it reads MFTLKKPLLVLFFLATINLSLC. A propeptide spans 23 to 43 (removed in mature form); that stretch reads EQERNAEEERRDDDERNVEVE.

In terms of tissue distribution, expressed by the skin glands.

It is found in the secreted. Its function is as follows. Antimicrobial peptide active against a variety of Gram-positive bacterial strains but not against Gram-negative bacteria. Has weak antifungal activity against a slime mold isolate. Has weak hemolytic activity against human erythrocytes. This Amolops chunganensis (Chungan torrent frog) protein is Temporin-CG2.